A 249-amino-acid chain; its full sequence is Putative [LysW]-aminoadipate/[LysW]-glutamate kinase (249 aa).

Substrate contacts are provided by Arg-63 and Asn-166.

The protein belongs to the acetylglutamate kinase family. LysZ subfamily.

It is found in the cytoplasm. The enzyme catalyses [amino-group carrier protein]-C-terminal-N-(1,4-dicarboxybutan-1-yl)-L-glutamine + ATP = [amino-group carrier protein]-C-terminal-N-(1-carboxy-5-phosphooxy-5-oxopentan-1-yl)-L-glutamine + ADP. The catalysed reaction is [amino-group carrier protein]-C-terminal-gamma-(L-glutamyl)-L-glutamate + ATP = [amino-group carrier protein]-C-terminal-gamma-(5-phospho-L-glutamyl)-L-glutamate + ADP. It participates in amino-acid biosynthesis; L-lysine biosynthesis via AAA pathway; L-lysine from L-alpha-aminoadipate (Thermus route): step 2/5. It functions in the pathway amino-acid biosynthesis; L-arginine biosynthesis. In terms of biological role, involved in both the arginine and lysine biosynthetic pathways. Phosphorylates the LysW-bound precursors glutamate (for arginine biosynthesis), respectively alpha-aminoadipate (for lysine biosynthesis). In Pyrococcus furiosus (strain ATCC 43587 / DSM 3638 / JCM 8422 / Vc1), this protein is Putative [LysW]-aminoadipate/[LysW]-glutamate kinase.